The following is a 515-amino-acid chain: MVVAYKHEPFTDFSVEANKLAFEEGLKKVESYLGQDYPLIIGGEKITTEDKIVSVNPANKEELVGRVSKASRELAEKAMQVADETFQTWRKSKPEMRADILFRAAAIVRRRKHEFSAILVKEAGKPWNEADADTAEAIDFMEYYGRQMLKLKDGIPVESRPIEYNRFSYIPLGVGVIISPWNFPFAIMAGMTTAALVSGNTVLLKPASTTPVVAAKFMEVLEEAGLPAGVVNFVPGNGSEVGDYLVDHPRTRFVSFTGSRDVGIRIYERAAKVNPGQIWLKRVIAEMGGKDTIVVDKEADLELAAKSIVASAFGFSGQKCSACSRAVIHEDVYDHVLNRAVELTKELTVANPAVLGTNMGPVNDQAAFDKVMSYVAIGKEEGRILAGGEGDDSKGWFIQPTIVADVAEDARLMKEEIFGPVVAFCKAKDFDHALAIANNTEYGLTGAVITNNRDHIEKAREDFHVGNLYFNRGCTGAIVGYQPFGGFNMSGTDSKAGGPDYLALHMQAKTTSETL.

Active-site residues include Glu286 and Cys320.

The protein belongs to the aldehyde dehydrogenase family. RocA subfamily.

The catalysed reaction is L-glutamate 5-semialdehyde + NAD(+) + H2O = L-glutamate + NADH + 2 H(+). It functions in the pathway amino-acid degradation; L-proline degradation into L-glutamate; L-glutamate from L-proline: step 2/2. The polypeptide is 1-pyrroline-5-carboxylate dehydrogenase (Bacillus cereus (strain B4264)).